A 150-amino-acid polypeptide reads, in one-letter code: KLPYSITVTYDHRTSPHIPFSSHIGKQNSFFSFLSRKKSMYHHITFCSVPATDGRARGQRPTGHFHLFFVVNRLLPRTRSTTKPSCSFAQPVTPRTREGAGVRGHRRRRRGSLSLIPWKTSNDKQKDDKRSLFCYMREIIAVGNFSKYML.

The span at 81-90 shows a compositional bias: polar residues; that stretch reads TTKPSCSFAQ. The interval 81-125 is disordered; the sequence is TTKPSCSFAQPVTPRTREGAGVRGHRRRRRGSLSLIPWKTSNDKQ.

This is an uncharacterized protein from Homo sapiens (Human).